A 242-amino-acid chain; its full sequence is Probable derlin-1 homolog (242 aa).

The Cytoplasmic segment spans residues 1 to 18 (MDGVKEWFNSIPPVSRYM). A helical membrane pass occupies residues 19–39 (FAIFLGIPVLAAMHLISFNYL). The Lumenal segment spans residues 40 to 98 (YLDFTFTFKHFHLWRLITAPCIISSLGPMFLFNLIFFYQYTTRLESLNYAGKSDDYLFC). The helical transmembrane segment at 99–119 (IIFISICNIIFGLIFEYYFLG) threads the bilayer. Over 120 to 140 (TMTIMSLIYIYSRMNPTGTSN) the chain is Cytoplasmic. The helical transmembrane segment at 141–161 (FYGFFSFKTIYLPWVFLVAHF) threads the bilayer. Topologically, residues 162–167 (LQTGHP) are lumenal. The helical transmembrane segment at 168-188 (PYSDFLAIVSGHIFFYLTDIY) threads the bilayer. Residues 189 to 242 (PRANGVPALIKTPKFITNIFNKGDRNPNNVRRDPRTGRPIQEGGYNWGQGHALG) lie on the Cytoplasmic side of the membrane. The span at 214 to 224 (NPNNVRRDPRT) shows a compositional bias: basic and acidic residues. Positions 214 to 242 (NPNNVRRDPRTGRPIQEGGYNWGQGHALG) are disordered. The span at 233–242 (YNWGQGHALG) shows a compositional bias: gly residues.

This sequence belongs to the derlin family.

Its subcellular location is the endoplasmic reticulum membrane. In terms of biological role, may be involved in the degradation process of specific misfolded endoplasmic reticulum (ER) luminal proteins. May also involved in endoplasmic reticulum stress-induced pre-emptive quality control, a mechanism that selectively attenuates the translocation of newly synthesized proteins into the endoplasmic reticulum and reroutes them to the cytosol for proteasomal degradation. The chain is Probable derlin-1 homolog from Dictyostelium discoideum (Social amoeba).